Reading from the N-terminus, the 610-residue chain is Synaptotagmin-like protein 3 (610 aa).

Residues 4 to 123 enclose the RabBD domain; it reads EIDLSALKEL…IKTGEWFYEE (120 aa). Residues 219 to 239 are disordered; the sequence is RQCVGQTERRSQSDTAVNVTT. C2 domains are found at residues 306-428 and 462-603; these read VTGE…TQSF and RPRK…NLWT.

Monomer. Binds NRXN1. Binds RAB27A that has been activated by GTP-binding via its N-terminus.

Its subcellular location is the endomembrane system. Its function is as follows. May act as Rab effector protein and play a role in vesicle trafficking. Binds phospholipids in the presence of calcium ions. In Homo sapiens (Human), this protein is Synaptotagmin-like protein 3 (SYTL3).